Here is a 702-residue protein sequence, read N- to C-terminus: Phosphatase and actin regulator 4 (702 aa).

Disordered regions lie at residues 1–37 (MEDPFEEADQPTTEPGMVLDSVEAGDTTPPTKRKSKF), 72–194 (RKPR…SSGG), and 222–363 (NLSV…PFPA). One copy of the RPEL 1 repeat lies at 63-88 (EVLERKISMRKPREELVKRGVLLEDP). Basic and acidic residues predominate over residues 72–84 (RKPREELVKRGVL). Residues 106–120 (GHTTPIGNARSSSPV) show a composition bias toward polar residues. A phosphoserine mark is found at Ser-116, Ser-118, Ser-131, and Ser-147. Over residues 147–156 (STGSQPNSEA) the composition is skewed to polar residues. Positions 163–173 (VPKPPLLPPKR) are enriched in pro residues. Residues 233 to 250 (TLPAAPASTNTTATPSLT) show a composition bias toward low complexity. A phosphoserine mark is found at Ser-270 and Ser-291. The span at 301–318 (PSTSVPTLESAAAITTKT) shows a compositional bias: polar residues. Ser-342 and Ser-344 each carry phosphoserine. The span at 342-362 (SPSPPLPTHIPPEPPRTPPFP) shows a compositional bias: pro residues. Phosphothreonine is present on Thr-358. Residue Ser-427 is modified to Phosphoserine. The residue at position 432 (Thr-432) is a Phosphothreonine. Ser-443, Ser-453, and Ser-464 each carry phosphoserine. The segment at 469–536 (IEMLKVPDDE…EEDEDESYQS (68 aa)) is disordered. Positions 484-497 (TCPSTFSEEMTPTS) are enriched in polar residues. Positions 508–518 (EEEEKESDSDS) are enriched in acidic residues. Phosphoserine occurs at positions 514, 516, 557, and 590. RPEL repeat units lie at residues 583 to 608 (NTLIRRLSQRPTPEELEQRNILQPKN) and 621 to 646 (RRLTRKLSQRPTVAELLARKILRFNE). The segment at 592 to 615 (RPTPEELEQRNILQPKNEADRQAE) is disordered. The residue at position 628 (Ser-628) is a Phosphoserine.

The protein belongs to the phosphatase and actin regulator family. In terms of assembly, binds PPP1CA and actin.

The protein resides in the cytoplasm. It localises to the cell projection. Its subcellular location is the lamellipodium. In terms of biological role, regulator of protein phosphatase 1 (PP1) required for neural tube and optic fissure closure, and enteric neural crest cell (ENCCs) migration during development. Acts as an activator of PP1 by interacting with PPP1CA and preventing phosphorylation of PPP1CA at 'Thr-320'. During neural tube closure, localizes to the ventral neural tube and activates PP1, leading to down-regulate cell proliferation within cranial neural tissue and the neural retina. Also acts as a regulator of migration of enteric neural crest cells (ENCCs) by activating PP1, leading to dephosphorylation and subsequent activation of cofilin (COF1 or COF2) and repression of the integrin signaling through the RHO/ROCK pathway. The protein is Phosphatase and actin regulator 4 (PHACTR4) of Homo sapiens (Human).